A 344-amino-acid chain; its full sequence is Dihydroorotase (344 aa).

Zn(2+)-binding residues include His13 and His15. Residues His15 to Arg17 and Asn41 contribute to the substrate site. Lys98, His135, and His173 together coordinate Zn(2+). Lys98 is modified (N6-carboxylysine). A substrate-binding site is contributed by His135. Leu218 contributes to the substrate binding site. Asp247 lines the Zn(2+) pocket. Asp247 is an active-site residue. Substrate-binding residues include His251 and Ala263.

Belongs to the metallo-dependent hydrolases superfamily. DHOase family. Class II DHOase subfamily. In terms of assembly, homodimer. The cofactor is Zn(2+).

It carries out the reaction (S)-dihydroorotate + H2O = N-carbamoyl-L-aspartate + H(+). It functions in the pathway pyrimidine metabolism; UMP biosynthesis via de novo pathway; (S)-dihydroorotate from bicarbonate: step 3/3. Catalyzes the reversible cyclization of carbamoyl aspartate to dihydroorotate. The polypeptide is Dihydroorotase (Neisseria gonorrhoeae (strain ATCC 700825 / FA 1090)).